A 513-amino-acid chain; its full sequence is V-type proton ATPase subunit B, kidney isoform (513 aa).

The segment covering Met-1 to Asp-18 has biased composition (polar residues). The tract at residues Met-1 to Thr-21 is disordered. Arg-394 lines the ATP pocket. Residues Asp-510 to Leu-513 carry the PDZ-binding motif.

This sequence belongs to the ATPase alpha/beta chains family. V-ATPase is a heteromultimeric enzyme made up of two complexes: the ATP-hydrolytic V1 complex and the proton translocation V0 complex. The V1 complex consists of three catalytic AB heterodimers that form a heterohexamer, three peripheral stalks each consisting of EG heterodimers, one central rotor including subunits D and F, and the regulatory subunits C and H. The proton translocation complex V0 consists of the proton transport subunit a, a ring of proteolipid subunits c9c'', rotary subunit d, subunits e and f, and the accessory subunits ATP6AP1/Ac45 and ATP6AP2/PRR. Forms a complex with NHERF1 and SCL4A7. In terms of tissue distribution, highly expressed in the kidney; found in early distal nephron, encompassing thick ascending limbs and distal convoluted tubules and in the alpha-intercalated cells of the cortical collecting ducts (at protein level). Expressed in the olfactory epithelium (at protein level). Expressed at lower levels in the testis.

The protein resides in the apical cell membrane. Its subcellular location is the basolateral cell membrane. Functionally, non-catalytic subunit of the V1 complex of vacuolar(H+)-ATPase (V-ATPase), a multisubunit enzyme composed of a peripheral complex (V1) that hydrolyzes ATP and a membrane integral complex (V0) that translocates protons. V-ATPase is responsible for acidifying and maintaining the pH of intracellular compartments and in some cell types, is targeted to the plasma membrane, where it is responsible for acidifying the extracellular environment. Essential for the proper assembly and activity of V-ATPase. In renal intercalated cells, mediates secretion of protons (H+) into the urine thereby ensuring correct urinary acidification. Required for optimal olfactory function by mediating the acidification of the nasal olfactory epithelium. This chain is V-type proton ATPase subunit B, kidney isoform (Atp6v1b1), found in Mus musculus (Mouse).